We begin with the raw amino-acid sequence, 689 residues long: Glycine--tRNA ligase beta subunit (689 aa).

This sequence belongs to the class-II aminoacyl-tRNA synthetase family. As to quaternary structure, tetramer of two alpha and two beta subunits.

The protein resides in the cytoplasm. It carries out the reaction tRNA(Gly) + glycine + ATP = glycyl-tRNA(Gly) + AMP + diphosphate. This is Glycine--tRNA ligase beta subunit from Citrobacter koseri (strain ATCC BAA-895 / CDC 4225-83 / SGSC4696).